A 372-amino-acid chain; its full sequence is Tetraacyldisaccharide 4'-kinase (372 aa).

T65–T72 is a binding site for ATP. The tract at residues Q351–A372 is disordered. Positions G360–A372 are enriched in basic and acidic residues.

It belongs to the LpxK family.

It carries out the reaction a lipid A disaccharide + ATP = a lipid IVA + ADP + H(+). It functions in the pathway glycolipid biosynthesis; lipid IV(A) biosynthesis; lipid IV(A) from (3R)-3-hydroxytetradecanoyl-[acyl-carrier-protein] and UDP-N-acetyl-alpha-D-glucosamine: step 6/6. Transfers the gamma-phosphate of ATP to the 4'-position of a tetraacyldisaccharide 1-phosphate intermediate (termed DS-1-P) to form tetraacyldisaccharide 1,4'-bis-phosphate (lipid IVA). The polypeptide is Tetraacyldisaccharide 4'-kinase (Cupriavidus metallidurans (strain ATCC 43123 / DSM 2839 / NBRC 102507 / CH34) (Ralstonia metallidurans)).